The following is a 223-amino-acid chain: Protein BTG4 (223 aa).

This sequence belongs to the BTG family. Interacts with CNOT7. Interacts with EIF4E. Interacts with CNOT8. Expressed in oocytes after germinal vesicle breakdown. Expressed in testis and in olfactory epithelium.

Its function is as follows. Adapter protein that bridges CNOT7, a catalytic subunit of the CCR4-NOT complex, to EIF4E. Facilitates maternal mRNAs decay during the maturation of oocytes and in the fertilized egg, and is required for the maternal-zygotic transition (MZT), zygotic cleavage and initiation of embryonic development. The sequence is that of Protein BTG4 (BTG4) from Homo sapiens (Human).